The following is a 1940-amino-acid chain: MEGGTDAAAFAAFPSIHAVPSTSGRMVTGSKLDELERIMKSSLHLEEDDFVPELPRSIHPRERPDWEETISAMARGADITVPGEIQIPAELPLRSCGSTASMKVKNVKKLSFTKGHFPKLAECAHFHYENVDFGSIQLTLTEDQNEVNRNGCESKELVFLVQIACQGRSWIVKRSYEDFRVLDKHLHLCIYDRRFSQLSELPRSDSVKDNPELVTQMLMAYLSRLSAIAGNKINCGPALTWMEIDNKGNHLLVHEESSINVPAIAAAHVIKRYNAQAPDELSFEVGDIVSVIDMPPKELTTWWRGKHGFQVGFFPSECVELINDKVPQSMTNSVPKPVSRKHGKLITFLRTFMKSRPSKQKLKQRGILRERVFGCDLGEHLLNSGQDVPQVLRSCTEFIEKHGVVDGIYRLSGIASNIQKLRHEFDSEQIPDLTKDVYIQDIHCVGSLCKLYFRELPNPLLTYQLYEKFSDAVSAASDEERLVKIHDVIQQLPPPHYRTLEFLMRHLSRLATYCSITNMHTKNLAIVWAPNLLRSKQIESACFSGTAAFMEVRIQSVVVEFILNHVEVLFSAKLSSVIREGAGHTSLSRPKSLLVSSPSTKLLSLEEAQARTQAQINSPVVGDSRYIEVGEGPAALQGRFHTVIDFPSERKRPPSKMKKSPVGSWRSFFNIGKSSSSSSMSKRKLQRNPSEPLEMKSMAFAGGRDSSAMRSAKSEESLSSLHAADGESKLFRPRRPRSSSDALSASYNGDLLDSCNRCNSYDNLPRDHDSDGDEGLIHVPAMLSGRSPEDEDLSPPDIGMATLDFDPMSFQCSPHQLDSEGPDNFFQLDIFASNGKDKLQSGTQNPGSVTGCEPLSPFQDKVISPFLSPDRSPSTDKVSKTASFAEKFVQALSPKMGRKAVRSPPLTISDPVSISLPSRVSEMIGSMPGNSAASQSIIWNRESSTNSRESETYYGCKLVDANLSSSSATADPWSTVTPVITCNQDGREDKAGIFTHGFPQPLESSDLEYIENYNLELGTTNVAAAYQNDDTELSRANQNKAHPPNSPQGASASESPQELSHVSSVSIIPPPPPPKNPARMLALALAESAQQASANKKPSFMQFMDLPPPPSVPEDKPLLEFSPKMSPEPLRSGPATPAASPPVISRKTSPATPPSTTSSFSVTTIHHSPVKNYNPLAGQMPTAVTPGLSPSSNQVFASVPDMLHSETIKMNSIIPSEAFTTGIPVTPPTEKTKESSRAPHLHQRSESFPSHPAYSTAKPTPPVRTMDSRLATAMHSNFNDSITANNYHSFLNTMMLPSSLEDALPRHNYSPHLKTGNIDEEGVNYRQTYLSHNKQDDPADLGDLYRQPYISPGKSENAEIGNAYRHPYPSNTESESLKEPLEPFLHHKPAVAPKTYRAETLLPHIPPQVYGSRCDTPSSAFYGTYINQAKHPRSRNKPDYMPSMSPGVRSYTEDTSSYPTIRRVQSLHVPMQTLPPPIRTVPISRTEVPPDDDPAYCPRPLYQYKQCPPFNSQSDYHVTQLQPYFENGRVHYRYSPYSGGPTYFSSDSNFYDMDPYGTLRLRQLPLYPSRDFASYTTRLQPKATYRSQGLPPYPRGTLREHNFISRDVPPALPPEHPRPLHISWDMEDMDRYRLQSLRRENKARQRAKGPVMSQYDNVTPSLVEDVAGLDVIHLRSRSDPGKTPGLLSVAETKDVRYPGRTEGDERTTYPPPVFGNGHQDKPSLPQKQSGSSRSRMQHDISTEQHSQDTLHRQPSEGRNGPPIPPVDYNAKGMPNPPDPTSYHSSANKYNLTQQEPMRLNHKELRLTEDIERSHTRPADNQHRDCYREEQAQFASVVPPPKPERSHSLRAHNPAVLERDPSIFYPYQTLHAKRQSTINTVSQYDNLSDYHSIPHHRTTNQSTPNAFPLPHGRTYSTALGQGAFLAAELALQRPETKIHVE.

A PX; atypical domain is found at 154–248 (SKELVFLVQI…LTWMEIDNKG (95 aa)). The SH3 domain maps to 262–324 (PAIAAAHVIK…PSECVELIND (63 aa)). Positions 375-570 (CDLGEHLLNS…FILNHVEVLF (196 aa)) constitute a Rho-GAP domain. Disordered regions lie at residues 646–746 (FPSE…LSAS), 1035–1163 (RANQ…FSVT), 1219–1264 (FTTG…PPVR), 1430–1454 (KHPR…YTED), and 1675–1786 (RSRS…HSSA). Polar residues predominate over residues 1047–1061 (PQGASASESPQELSH). Composition is skewed to low complexity over residues 1081 to 1094 (LALA…QASA) and 1145 to 1163 (SRKT…FSVT). The segment covering 1691–1707 (ETKDVRYPGRTEGDERT) has biased composition (basic and acidic residues). Polar residues predominate over residues 1725–1734 (PQKQSGSSRS). The span at 1736 to 1755 (MQHDISTEQHSQDTLHRQPS) shows a compositional bias: basic and acidic residues.

This sequence belongs to the PX domain-containing GAP family.

The protein localises to the cytoplasm. Its subcellular location is the membrane. The protein resides in the cell membrane. In terms of biological role, GTPase-activating protein (GAP) promoting GTP hydrolysis on RHOA, CDC42 and RAC1 small GTPases. This Xenopus laevis (African clawed frog) protein is Rho GTPase-activating protein 32 (arhgap32).